The chain runs to 146 residues: 3-dehydroquinate dehydratase (146 aa).

The active-site Proton acceptor is the Tyr-22. Residues Asn-73, His-79, and Asp-86 each coordinate substrate. His-99 (proton donor) is an active-site residue. Substrate-binding positions include 100 to 101 (IS) and Arg-110.

Belongs to the type-II 3-dehydroquinase family. In terms of assembly, homododecamer.

The catalysed reaction is 3-dehydroquinate = 3-dehydroshikimate + H2O. The protein operates within metabolic intermediate biosynthesis; chorismate biosynthesis; chorismate from D-erythrose 4-phosphate and phosphoenolpyruvate: step 3/7. Functionally, catalyzes a trans-dehydration via an enolate intermediate. This is 3-dehydroquinate dehydratase from Prochlorococcus marinus subsp. pastoris (strain CCMP1986 / NIES-2087 / MED4).